Consider the following 223-residue polypeptide: Deoxyribose-phosphate aldolase (223 aa).

Catalysis depends on D89, which acts as the Proton donor/acceptor. Residue K152 is the Schiff-base intermediate with acetaldehyde of the active site. The active-site Proton donor/acceptor is the K181.

Belongs to the DeoC/FbaB aldolase family. DeoC type 1 subfamily.

Its subcellular location is the cytoplasm. It catalyses the reaction 2-deoxy-D-ribose 5-phosphate = D-glyceraldehyde 3-phosphate + acetaldehyde. The protein operates within carbohydrate degradation; 2-deoxy-D-ribose 1-phosphate degradation; D-glyceraldehyde 3-phosphate and acetaldehyde from 2-deoxy-alpha-D-ribose 1-phosphate: step 2/2. In terms of biological role, catalyzes a reversible aldol reaction between acetaldehyde and D-glyceraldehyde 3-phosphate to generate 2-deoxy-D-ribose 5-phosphate. The chain is Deoxyribose-phosphate aldolase from Bacillus cereus (strain AH187).